Consider the following 434-residue polypeptide: Glutamate-1-semialdehyde 2,1-aminomutase 1 (434 aa).

At lysine 270 the chain carries N6-(pyridoxal phosphate)lysine.

Belongs to the class-III pyridoxal-phosphate-dependent aminotransferase family. HemL subfamily. Homodimer. Pyridoxal 5'-phosphate serves as cofactor.

The protein resides in the cytoplasm. The enzyme catalyses (S)-4-amino-5-oxopentanoate = 5-aminolevulinate. It participates in porphyrin-containing compound metabolism; protoporphyrin-IX biosynthesis; 5-aminolevulinate from L-glutamyl-tRNA(Glu): step 2/2. The chain is Glutamate-1-semialdehyde 2,1-aminomutase 1 from Bacillus thuringiensis (strain Al Hakam).